Consider the following 452-residue polypeptide: Bifunctional protein GlmU (452 aa).

The pyrophosphorylase stretch occupies residues 1–226 (MSLSVVILAA…ATEVEGVNTR (226 aa)). Residues 8–11 (LAAG), Lys-22, Gln-73, 78–79 (GT), 100–102 (YGD), Gly-137, Glu-151, Asn-166, and Asn-224 contribute to the UDP-N-acetyl-alpha-D-glucosamine site. Position 102 (Asp-102) interacts with Mg(2+). Asn-224 lines the Mg(2+) pocket. Residues 227–247 (LQLANLERAYQLKKATELLLS) are linker. Residues 248 to 452 (GVMLRDPNRF…INNWKRPTKK (205 aa)) form an N-acetyltransferase region. The UDP-N-acetyl-alpha-D-glucosamine site is built by Arg-330 and Lys-348. The Proton acceptor role is filled by His-360. Residues Tyr-363 and Asn-374 each coordinate UDP-N-acetyl-alpha-D-glucosamine. Residues Ala-377, 383-384 (NY), Ser-402, Ala-420, and Arg-437 each bind acetyl-CoA.

This sequence in the N-terminal section; belongs to the N-acetylglucosamine-1-phosphate uridyltransferase family. The protein in the C-terminal section; belongs to the transferase hexapeptide repeat family. Homotrimer. Mg(2+) is required as a cofactor.

It is found in the cytoplasm. It carries out the reaction alpha-D-glucosamine 1-phosphate + acetyl-CoA = N-acetyl-alpha-D-glucosamine 1-phosphate + CoA + H(+). The enzyme catalyses N-acetyl-alpha-D-glucosamine 1-phosphate + UTP + H(+) = UDP-N-acetyl-alpha-D-glucosamine + diphosphate. It participates in nucleotide-sugar biosynthesis; UDP-N-acetyl-alpha-D-glucosamine biosynthesis; N-acetyl-alpha-D-glucosamine 1-phosphate from alpha-D-glucosamine 6-phosphate (route II): step 2/2. Its pathway is nucleotide-sugar biosynthesis; UDP-N-acetyl-alpha-D-glucosamine biosynthesis; UDP-N-acetyl-alpha-D-glucosamine from N-acetyl-alpha-D-glucosamine 1-phosphate: step 1/1. It functions in the pathway bacterial outer membrane biogenesis; LPS lipid A biosynthesis. Its function is as follows. Catalyzes the last two sequential reactions in the de novo biosynthetic pathway for UDP-N-acetylglucosamine (UDP-GlcNAc). The C-terminal domain catalyzes the transfer of acetyl group from acetyl coenzyme A to glucosamine-1-phosphate (GlcN-1-P) to produce N-acetylglucosamine-1-phosphate (GlcNAc-1-P), which is converted into UDP-GlcNAc by the transfer of uridine 5-monophosphate (from uridine 5-triphosphate), a reaction catalyzed by the N-terminal domain. The sequence is that of Bifunctional protein GlmU from Psychromonas ingrahamii (strain DSM 17664 / CCUG 51855 / 37).